The following is a 61-amino-acid chain: Venom protein 22.1 (61 aa).

The N-terminal stretch at 1 to 18 is a signal peptide; that stretch reads MDIKGLLVILFFVLLITG.

The protein belongs to the non-disulfide-bridged peptide (NDBP) superfamily. Long chain multifunctional peptide (group 2) family. As to expression, expressed by the venom gland.

The protein localises to the secreted. This is Venom protein 22.1 from Lychas mucronatus (Chinese swimming scorpion).